The chain runs to 206 residues: Small ribosomal subunit protein uS4 (206 aa).

An S4 RNA-binding domain is found at 96–156; that stretch reads GRLDNVVYRM…EKSKKQARIK (61 aa).

The protein belongs to the universal ribosomal protein uS4 family. Part of the 30S ribosomal subunit. Contacts protein S5. The interaction surface between S4 and S5 is involved in control of translational fidelity.

One of the primary rRNA binding proteins, it binds directly to 16S rRNA where it nucleates assembly of the body of the 30S subunit. In terms of biological role, with S5 and S12 plays an important role in translational accuracy. The polypeptide is Small ribosomal subunit protein uS4 (Pasteurella multocida (strain Pm70)).